Here is a 591-residue protein sequence, read N- to C-terminus: Aspartate--tRNA(Asp/Asn) ligase (591 aa).

Residue E175 participates in L-aspartate binding. Positions 199 to 202 are aspartate; the sequence is QQFK. L-aspartate contacts are provided by R221 and H453. Position 221-223 (221-223) interacts with ATP; the sequence is RDE. E486 contacts ATP. R493 serves as a coordination point for L-aspartate. 538 to 541 contributes to the ATP binding site; the sequence is GIDR.

Belongs to the class-II aminoacyl-tRNA synthetase family. Type 1 subfamily. In terms of assembly, homodimer.

Its subcellular location is the cytoplasm. It catalyses the reaction tRNA(Asx) + L-aspartate + ATP = L-aspartyl-tRNA(Asx) + AMP + diphosphate. Aspartyl-tRNA synthetase with relaxed tRNA specificity since it is able to aspartylate not only its cognate tRNA(Asp) but also tRNA(Asn). Reaction proceeds in two steps: L-aspartate is first activated by ATP to form Asp-AMP and then transferred to the acceptor end of tRNA(Asp/Asn). The polypeptide is Aspartate--tRNA(Asp/Asn) ligase (Paracoccus denitrificans (strain Pd 1222)).